The chain runs to 287 residues: Protease HtpX (287 aa).

Helical transmembrane passes span 4 to 24 and 33 to 53; these read IFLL…VMSI and GGLL…SLAI. His-139 contributes to the Zn(2+) binding site. Glu-140 is an active-site residue. A Zn(2+)-binding site is contributed by His-143. The next 2 membrane-spanning stretches (helical) occupy residues 154 to 174 and 195 to 215; these read LIQG…AGII and AVVF…VAYF. Zn(2+) is bound at residue Glu-220.

The protein belongs to the peptidase M48B family. It depends on Zn(2+) as a cofactor.

The protein localises to the cell inner membrane. The sequence is that of Protease HtpX from Shewanella pealeana (strain ATCC 700345 / ANG-SQ1).